We begin with the raw amino-acid sequence, 1142 residues long: SNF1-activating kinase 1 (1142 aa).

The disordered stretch occupies residues 22–41; that stretch reads ELEKSGTSSSVSLRSPTKSS. At Thr43 the chain carries Phosphothreonine. A compositionally biased stretch (polar residues) spans 82-93; it reads QHQQHISSSLAK. A disordered region spans residues 82-107; it reads QHQQHISSSLAKTPTTTSSFCSSGSS. Over residues 94 to 107 the composition is skewed to low complexity; that stretch reads TPTTTSSFCSSGSS. Residues 133 to 448 enclose the Protein kinase domain; it reads YEIIKELGHG…IPAIKKHPFV (316 aa). Residues 139–147 and Lys162 contribute to the ATP site; that span reads LGHGQHGKV. Residue Asp277 is the Proton acceptor of the active site. 6 disordered regions span residues 634–678, 694–799, 825–875, 919–971, 1005–1027, and 1066–1142; these read SPEA…VLPQ, NSLL…NSPI, SHFN…AYSE, KSSL…QKGS, SQPI…KATT, and STNA…SALP. Positions 640–656 are enriched in polar residues; the sequence is SVSSVPNLPSAPSSTRL. Low complexity predominate over residues 694 to 706; it reads NSLLRNSSSHLTS. Residues 707–741 show a composition bias toward polar residues; it reads YNSGRPSSRTGRMNSRNQNLPKIPNSLSKISTTKL. Residues 742 to 751 are compositionally biased toward basic and acidic residues; sequence TELRVPKDSE. Positions 785-799 are enriched in polar residues; the sequence is NINSSDKSGSKNSPI. 2 stretches are compositionally biased toward low complexity: residues 835 to 868 and 920 to 936; these read SSQS…RNSS and SSLN…SSSS. Over residues 958–971 the composition is skewed to polar residues; sequence SKLSELSNSPQKGS. Ser964 carries the post-translational modification Phosphoserine. The span at 1096–1111 shows a compositional bias: basic and acidic residues; the sequence is NDEHARNTSCHGDKGQ. At Ser1126 the chain carries Phosphoserine. Residues 1133–1142 are compositionally biased toward basic and acidic residues; that stretch reads NEEKRRSALP.

The protein belongs to the protein kinase superfamily. Ser/Thr protein kinase family. As to quaternary structure, associates with the SNF1 kinase complex. Interacts with SNF1 and REG1. In terms of processing, autophosphorylated.

It localises to the cytoplasm. The catalysed reaction is L-seryl-[protein] + ATP = O-phospho-L-seryl-[protein] + ADP + H(+). The enzyme catalyses L-threonyl-[protein] + ATP = O-phospho-L-threonyl-[protein] + ADP + H(+). Its function is as follows. Serine/threonine-protein kinase that phosphorylates SNF1, the catalytic subunit of the SNF1 kinase complex. Acts as an activator of the SNF1 kinase complex and controls its nuclear localization upon glucose and nitrogen depletion. Also required for SNF1 kinase activation under other stress conditions like alkaline pH or presence of cadmium. The polypeptide is SNF1-activating kinase 1 (SAK1) (Saccharomyces cerevisiae (strain ATCC 204508 / S288c) (Baker's yeast)).